The chain runs to 204 residues: Ribonuclease HII (204 aa).

The region spanning 1 to 197 (MTLGIDEAGR…KNRILNPKLL (197 aa)) is the RNase H type-2 domain. Positions 6, 7, and 103 each coordinate a divalent metal cation.

The protein belongs to the RNase HII family. The cofactor is Mn(2+). It depends on Mg(2+) as a cofactor.

It localises to the cytoplasm. It carries out the reaction Endonucleolytic cleavage to 5'-phosphomonoester.. Endonuclease that specifically degrades the RNA of RNA-DNA hybrids. This Helicobacter pylori (strain HPAG1) protein is Ribonuclease HII.